Consider the following 171-residue polypeptide: Large ribosomal subunit protein uL10 (171 aa).

It belongs to the universal ribosomal protein uL10 family. Part of the ribosomal stalk of the 50S ribosomal subunit. The N-terminus interacts with L11 and the large rRNA to form the base of the stalk. The C-terminus forms an elongated spine to which L12 dimers bind in a sequential fashion forming a multimeric L10(L12)X complex.

In terms of biological role, forms part of the ribosomal stalk, playing a central role in the interaction of the ribosome with GTP-bound translation factors. In Nitrosomonas europaea (strain ATCC 19718 / CIP 103999 / KCTC 2705 / NBRC 14298), this protein is Large ribosomal subunit protein uL10.